We begin with the raw amino-acid sequence, 71 residues long: Cell division protein FtsB (71 aa).

Residues 1–3 are Cytoplasmic-facing; the sequence is MKI. Residues 4 to 21 traverse the membrane as a helical segment; that stretch reads LKIFLLSLLFWLQYSLWF. Residues 22-71 lie on the Extracellular side of the membrane; the sequence is GKNGVLDFIKIYRRVTIEKKNNEYLDMRNNQIILEIENFNNHINKDKKKT.

It belongs to the FtsB family.

Its subcellular location is the cell membrane. Its function is as follows. Essential cell division protein. May link together the upstream cell division proteins, which are predominantly cytoplasmic, with the downstream cell division proteins, which are predominantly extracellular. The chain is Cell division protein FtsB from Buchnera aphidicola subsp. Acyrthosiphon pisum (strain APS) (Acyrthosiphon pisum symbiotic bacterium).